The following is a 305-amino-acid chain: Mas-related G-protein coupled receptor member A8 (305 aa).

Residues 1–17 lie on the Extracellular side of the membrane; sequence MDKTILGSIDIETLIRH. The helical transmembrane segment at 18–38 threads the bilayer; the sequence is LMIIIFGLVGLTGNAIVFWLL. Topologically, residues 39–46 are cytoplasmic; sequence GFHLHRNA. A helical transmembrane segment spans residues 47 to 67; sequence FLVYILNLALADFFYLLCHII. Topologically, residues 68 to 85 are extracellular; the sequence is NSIMFLLKVPSPNIILDH. Residues 86-106 form a helical membrane-spanning segment; sequence CFYTIMIVLYITGLSMLSAIS. Residues 107–129 lie on the Cytoplasmic side of the membrane; it reads TERCLSVLCPIWYRCHRPEHTST. Residues 130-150 traverse the membrane as a helical segment; it reads AMCAVIWVMSLLISILNGYFC. 2 N-linked (GlcNAc...) asparagine glycosylation sites follow: N151 and N159. The Extracellular portion of the chain corresponds to 151–172; that stretch reads NFSSPKYVNNSVCQASDIFIRT. A helical transmembrane segment spans residues 173 to 193; it reads YPIFLFVLLCLSTLALLARLF. The Cytoplasmic portion of the chain corresponds to 194 to 207; it reads SGAGKRKFTRLFVT. A helical membrane pass occupies residues 208-228; sequence IMLAILVFLLCGLPLGFFWFL. The Extracellular portion of the chain corresponds to 229–243; that stretch reads SPWIEDRFIVLDYRL. Residues 244–264 traverse the membrane as a helical segment; the sequence is FFASVVLTVVNSCANPIIYFF. The Cytoplasmic segment spans residues 265–305; sequence VGSFRHRLKQQTLKMFLQRALQDTPETPENMVEMSRSKAEP.

This sequence belongs to the G-protein coupled receptor 1 family. Mas subfamily. As to expression, expressed in a subset of sensory neurons that includes nociceptors. Expressed in the subclass of non-peptidergic sensory neurons that are IB4(+) and VR1(-).

Its subcellular location is the cell membrane. In terms of biological role, orphan receptor. May be a receptor for RFamide-family neuropeptides such as NPFF and NPAF, which are analgesic in vivo. May regulate nociceptor function and/or development, including the sensation or modulation of pain. This Mus musculus (Mouse) protein is Mas-related G-protein coupled receptor member A8 (Mrgpra8).